Reading from the N-terminus, the 984-residue chain is uncharacterized protein (984 aa).

The segment at 941–984 is disordered; sequence FGPSGPGPNQGPGDDYNNFKSTKYPRNGYNKYQPNNRIHSRNRY.

The protein resides in the virion. This is an uncharacterized protein from Acanthamoeba polyphaga (Amoeba).